Consider the following 242-residue polypeptide: Ubiquitin-conjugating enzyme E2 6 (242 aa).

Topologically, residues 1 to 217 are cytoplasmic; sequence MASRQAYKRL…QPAGNGTTSN (217 aa). Residues 5-163 enclose the UBC core domain; that stretch reads QAYKRLSKEY…FPELAEQNRR (159 aa). Residue Cys87 is the Glycyl thioester intermediate of the active site. The helical transmembrane segment at 218-240 threads the bilayer; sequence SIGRSLLFVLFSLAALLVAVCYT.

The protein belongs to the ubiquitin-conjugating enzyme family.

The protein resides in the endoplasmic reticulum membrane. It carries out the reaction S-ubiquitinyl-[E1 ubiquitin-activating enzyme]-L-cysteine + [E2 ubiquitin-conjugating enzyme]-L-cysteine = [E1 ubiquitin-activating enzyme]-L-cysteine + S-ubiquitinyl-[E2 ubiquitin-conjugating enzyme]-L-cysteine.. Its pathway is protein modification; protein ubiquitination. Its function is as follows. Catalyzes the covalent attachment of ubiquitin to other proteins. Functions in degradation of misfolded or regulated proteins localized in the endoplasmic reticulum (ER) lumen or membrane via the ubiquitin-proteasome system. Cognate E2 conjugating enzyme for the DOA10 ubiquitin ligase complex, which is part of the ERAD-C pathway responsible for the rapid degradation of membrane proteins with misfolded cytoplasmic domains. The sequence is that of Ubiquitin-conjugating enzyme E2 6 (UBC6) from Eremothecium gossypii (strain ATCC 10895 / CBS 109.51 / FGSC 9923 / NRRL Y-1056) (Yeast).